Consider the following 541-residue polypeptide: Propionyl-CoA carboxylase beta chain, mitochondrial (541 aa).

Residues 1–28 (MAAVIRIRAMAAGTRLRVLNCGLGTTIR) constitute a mitochondrion transit peptide. The 259-residue stretch at 34-292 (PVSVNERIEN…SNQDPASIRE (259 aa)) folds into the CoA carboxyltransferase N-terminal domain. The interval 34–535 (PVSVNERIEN…SKKVHRPWRK (502 aa)) is carboxyltransferase. A Phosphoserine modification is found at Ser-73. At Lys-101 the chain carries N6-acetyllysine; alternate. At Lys-101 the chain carries N6-succinyllysine; alternate. Position 250 is an N6-succinyllysine (Lys-250). The region spanning 296–535 (PSDRLVPELD…SKKVHRPWRK (240 aa)) is the CoA carboxyltransferase C-terminal domain. The tract at residues 327–360 (DEREFFEIMPNYAKNIVIGFARMNGRTVGIVGNQ) is acyl-CoA binding. N6-acetyllysine; alternate occurs at positions 476 and 491. N6-succinyllysine; alternate occurs at positions 476 and 491.

This sequence belongs to the AccD/PCCB family. The holoenzyme is a dodecamer composed of 6 PCCA/alpha subunits and 6 PCCB/beta subunits.

It localises to the mitochondrion matrix. It carries out the reaction propanoyl-CoA + hydrogencarbonate + ATP = (S)-methylmalonyl-CoA + ADP + phosphate + H(+). The enzyme catalyses butanoyl-CoA + hydrogencarbonate + ATP = (2S)-ethylmalonyl-CoA + ADP + phosphate + H(+). Its pathway is metabolic intermediate metabolism; propanoyl-CoA degradation; succinyl-CoA from propanoyl-CoA: step 1/3. This is one of the 2 subunits of the biotin-dependent propionyl-CoA carboxylase (PCC), a mitochondrial enzyme involved in the catabolism of odd chain fatty acids, branched-chain amino acids isoleucine, threonine, methionine, and valine and other metabolites. Propionyl-CoA carboxylase catalyzes the carboxylation of propionyl-CoA/propanoyl-CoA to D-methylmalonyl-CoA/(S)-methylmalonyl-CoA. Within the holoenzyme, the alpha subunit catalyzes the ATP-dependent carboxylation of the biotin carried by the biotin carboxyl carrier (BCC) domain, while the beta subunit then transfers the carboxyl group from carboxylated biotin to propionyl-CoA. Propionyl-CoA carboxylase also significantly acts on butyryl-CoA/butanoyl-CoA, which is converted to ethylmalonyl-CoA/(2S)-ethylmalonyl-CoA. Other alternative minor substrates include (2E)-butenoyl-CoA/crotonoyl-CoA. This chain is Propionyl-CoA carboxylase beta chain, mitochondrial, found in Rattus norvegicus (Rat).